The sequence spans 565 residues: Probable serine/threonine-protein kinase abkA (565 aa).

The stretch at 44–77 (NNNNISLKDKFKDLKDLKDNLNEKKINNDNDDDD) forms a coiled coil. The region spanning 231–565 (LFQDDPIAAA…FKNIFYKNYK (335 aa)) is the Protein kinase domain. ATP contacts are provided by residues 237 to 245 (IAAASIGQV) and K259. D401 functions as the Proton acceptor in the catalytic mechanism.

The protein belongs to the protein kinase superfamily. ADCK protein kinase family.

The polypeptide is Probable serine/threonine-protein kinase abkA (abkA) (Dictyostelium discoideum (Social amoeba)).